We begin with the raw amino-acid sequence, 320 residues long: Nucleotide-binding protein Psyc_0118 (320 aa).

ATP is bound at residue 32–39 (GRSGSGKT). 82-85 (DIRT) provides a ligand contact to GTP.

The protein belongs to the RapZ-like family.

Displays ATPase and GTPase activities. In Psychrobacter arcticus (strain DSM 17307 / VKM B-2377 / 273-4), this protein is Nucleotide-binding protein Psyc_0118.